A 1284-amino-acid chain; its full sequence is Neuronal cell adhesion molecule (1284 aa).

The first 24 residues, 1–24, serve as a signal peptide directing secretion; it reads MMKEKSISASKASLVFFLCQMISA. The Extracellular segment spans residues 25–1143; that stretch reads LDVPLDSKLL…ASRQVDIATQ (1119 aa). 6 consecutive Ig-like C2-type domains span residues 41–129, 136–230, 243–332, 337–424, 430–517, and 521–608; these read PTIT…AAIS, PSRS…QPIS, PPVL…ISVT, PYWI…AFVN, PRIL…VQLE, and PTMI…AVLT. Intrachain disulfides connect Cys63–Cys118 and Cys162–Cys213. An N-linked (GlcNAc...) asparagine glycan is attached at Asn78. N-linked (GlcNAc...) asparagine glycosylation is found at Asn218 and Asn290. 2 cysteine pairs are disulfide-bonded: Cys268–Cys316 and Cys358–Cys408. N-linked (GlcNAc...) asparagine glycans are attached at residues Asn409, Asn483, Asn576, Asn581, Asn595, and Asn692. Cystine bridges form between Cys452-Cys501 and Cys543-Cys592. Fibronectin type-III domains follow at residues 625–720, 725–819, 824–926, 930–1026, and 1040–1132; these read PPLD…TKSA, NPSN…SGED, APGN…TPEG, PPSF…IMDE, and QPLY…TGPA. Residues 707–731 are compositionally biased toward polar residues; it reads QPSEPSEQYLTKSANPDENPSNVQG. Positions 707–732 are disordered; sequence QPSEPSEQYLTKSANPDENPSNVQGI. 9 N-linked (GlcNAc...) asparagine glycosylation sites follow: Asn778, Asn834, Asn885, Asn969, Asn985, Asn995, Asn1048, Asn1059, and Asn1091. Residues 1144–1166 traverse the membrane as a helical segment; the sequence is GWFIGLMCAVALLILILLIVCFI. Over 1167 to 1284 the chain is Cytoplasmic; that stretch reads RRNKGGKYPV…SPVNAMNSFV (118 aa). Composition is skewed to basic and acidic residues over residues 1175 to 1195, 1202 to 1212, and 1221 to 1230; these read PVKEKEDAHADPEIQPMKEDD, RSLESDAEDHK, and PSDRTVKKED. A disordered region spans residues 1175–1284; that stretch reads PVKEKEDAHA…SPVNAMNSFV (110 aa). Residues 1268–1284 show a composition bias toward polar residues; sequence NESSEAPSPVNAMNSFV.

Belongs to the immunoglobulin superfamily. L1/neurofascin/NgCAM family. Heterodimer of an alpha and a beta chain. As to expression, retina and developing brain.

It is found in the cell membrane. Functionally, this protein is a cell adhesion molecule involved in neuron-neuron adhesion, neurite fasciculation, outgrowth of neurites, etc. Specifically involved in the development of optic fibres in the retina. The sequence is that of Neuronal cell adhesion molecule from Gallus gallus (Chicken).